We begin with the raw amino-acid sequence, 393 residues long: NAD(P)H-quinone oxidoreductase subunit H, chloroplastic (393 aa).

It belongs to the complex I 49 kDa subunit family. As to quaternary structure, NDH is composed of at least 16 different subunits, 5 of which are encoded in the nucleus.

Its subcellular location is the plastid. It is found in the chloroplast thylakoid membrane. The catalysed reaction is a plastoquinone + NADH + (n+1) H(+)(in) = a plastoquinol + NAD(+) + n H(+)(out). It catalyses the reaction a plastoquinone + NADPH + (n+1) H(+)(in) = a plastoquinol + NADP(+) + n H(+)(out). NDH shuttles electrons from NAD(P)H:plastoquinone, via FMN and iron-sulfur (Fe-S) centers, to quinones in the photosynthetic chain and possibly in a chloroplast respiratory chain. The immediate electron acceptor for the enzyme in this species is believed to be plastoquinone. Couples the redox reaction to proton translocation, and thus conserves the redox energy in a proton gradient. The polypeptide is NAD(P)H-quinone oxidoreductase subunit H, chloroplastic (Brachypodium distachyon (Purple false brome)).